A 377-amino-acid polypeptide reads, in one-letter code: MFAFEGFKWEIVEIFDWKGLKKLQTTFQNYLLILSMIVSIAVVVAIKNYDSLWSLITNSSDSSNFLTVGSILATISALLVSISWVIIQTSSDRLSNILMWIWVRDVRFLTFVVISFTTVFLFILISLTHVQLHVIDYGIIYYVIMLNFLMYALYIKAFANVINPKYAVDLILRDKDIGDKSGGYGDLTDAESRLFAVYEIIEKRIKVGDVYAVIKCLNMINKNFNKYWMFIKDEKREKYLRDFLRILSKLRVEYRKNCLNRKNKPYSKKGLEAFKKTEFIVSFYKTIEEKIKTRDINSINKFLSETYNNISNYEMFNDKTYLEIFVHHLKELLEKYEKEKNENKLDEEIFNELKDELEKLINKCNNKLRELESQNNN.

A run of 4 helical transmembrane segments spans residues 26-46 (TFQNYLLILSMIVSIAVVVAI), 67-87 (TVGSILATISALLVSISWVII), 108-128 (FLTFVVISFTTVFLFILISLT), and 135-155 (IDYGIIYYVIMLNFLMYALYI).

Its subcellular location is the cell membrane. This is an uncharacterized protein from Methanocaldococcus jannaschii (strain ATCC 43067 / DSM 2661 / JAL-1 / JCM 10045 / NBRC 100440) (Methanococcus jannaschii).